A 454-amino-acid chain; its full sequence is N-acetyl-S-(2-succino)cysteine lyase (454 aa).

106–107 (TT) serves as a coordination point for fumarate. Histidine 154 (proton donor/acceptor) is an active-site residue. Arginine 233 is a binding site for fumarate. The active-site Proton donor/acceptor is the serine 277. Residues threonine 278 and 283–285 (KRN) contribute to the fumarate site.

It belongs to the lyase 1 family.

The enzyme catalyses N-acetyl-S-(2-succino)-L-cysteine = N-acetyl-L-cysteine + fumarate. The protein operates within amino-acid biosynthesis; L-cysteine biosynthesis. Catalyzes the cleavage of N-acetyl-S-(2-succino)cysteine into fumarate and N-acetylcysteine. Is involved in a S-(2-succino)cysteine (2SC) degradation pathway that allows the bacterium to recover cysteine from 2SC and to detoxify 2SC that may be a toxic metabolite. Can also perform the reverse reaction in vitro, and has minor activity against 2SC and other small molecule thiols. The polypeptide is N-acetyl-S-(2-succino)cysteine lyase (Dickeya dadantii (strain 3937) (Erwinia chrysanthemi (strain 3937))).